The primary structure comprises 308 residues: Ribosomal RNA large subunit methyltransferase F (308 aa).

It belongs to the methyltransferase superfamily. METTL16/RlmF family.

The protein localises to the cytoplasm. It catalyses the reaction adenosine(1618) in 23S rRNA + S-adenosyl-L-methionine = N(6)-methyladenosine(1618) in 23S rRNA + S-adenosyl-L-homocysteine + H(+). Its function is as follows. Specifically methylates the adenine in position 1618 of 23S rRNA. This Escherichia fergusonii (strain ATCC 35469 / DSM 13698 / CCUG 18766 / IAM 14443 / JCM 21226 / LMG 7866 / NBRC 102419 / NCTC 12128 / CDC 0568-73) protein is Ribosomal RNA large subunit methyltransferase F.